We begin with the raw amino-acid sequence, 103 residues long: Toluene-4-monooxygenase system, effector component (103 aa).

The protein belongs to the TmoD/XamoD family. In terms of assembly, the alkene monooxygenase multicomponent enzyme system is composed of an electron transfer component and a monooxygenase component interacting with the effector protein TmoD. The electron transfer component is composed of a ferredoxin reductase (TmoF) and a ferredoxin (TmoC), and the monooxygenase component is formed by a heterohexamer (dimer of heterotrimers) of two alpha subunits (TmoA), two beta subunits (TmoE) and two gamma subunits (TmoB).

Its pathway is xenobiotic degradation; toluene degradation. Effector component of the toluene-4-monooxygenase multicomponent enzyme system which catalyzes the O2- and NADH-dependent hydroxylation of toluene to form p-cresol. Required for optimal efficiency and specificity of the holoenzyme. This Ectopseudomonas mendocina (Pseudomonas mendocina) protein is Toluene-4-monooxygenase system, effector component.